A 319-amino-acid chain; its full sequence is 1-aminocyclopropane-1-carboxylate oxidase 4 (319 aa).

In terms of domain architecture, Fe2OG dioxygenase spans proline 153–proline 253. Fe cation is bound by residues histidine 177, aspartate 179, and histidine 234.

Belongs to the iron/ascorbate-dependent oxidoreductase family. It depends on Fe cation as a cofactor.

It catalyses the reaction 1-aminocyclopropane-1-carboxylate + L-ascorbate + O2 = ethene + L-dehydroascorbate + hydrogen cyanide + CO2 + 2 H2O. The protein operates within alkene biosynthesis; ethylene biosynthesis via S-adenosyl-L-methionine; ethylene from S-adenosyl-L-methionine: step 2/2. The polypeptide is 1-aminocyclopropane-1-carboxylate oxidase 4 (ACO4) (Petunia hybrida (Petunia)).